Consider the following 273-residue polypeptide: Dermonecrotic toxin LhSicTox-alphaIA1ii (273 aa).

Residue His-5 is part of the active site. Residues Glu-25 and Asp-27 each coordinate Mg(2+). The active-site Nucleophile is the His-41. Disulfide bonds link Cys-45-Cys-51 and Cys-47-Cys-190. Asp-85 is a binding site for Mg(2+).

This sequence belongs to the arthropod phospholipase D family. Class II subfamily. The cofactor is Mg(2+). As to expression, expressed by the venom gland.

The protein resides in the secreted. It catalyses the reaction an N-(acyl)-sphingosylphosphocholine = an N-(acyl)-sphingosyl-1,3-cyclic phosphate + choline. It carries out the reaction an N-(acyl)-sphingosylphosphoethanolamine = an N-(acyl)-sphingosyl-1,3-cyclic phosphate + ethanolamine. The catalysed reaction is a 1-acyl-sn-glycero-3-phosphocholine = a 1-acyl-sn-glycero-2,3-cyclic phosphate + choline. The enzyme catalyses a 1-acyl-sn-glycero-3-phosphoethanolamine = a 1-acyl-sn-glycero-2,3-cyclic phosphate + ethanolamine. Its function is as follows. Dermonecrotic toxins cleave the phosphodiester linkage between the phosphate and headgroup of certain phospholipids (sphingolipid and lysolipid substrates), forming an alcohol (often choline) and a cyclic phosphate. This toxin acts on sphingomyelin (SM). It may also act on ceramide phosphoethanolamine (CPE), lysophosphatidylcholine (LPC) and lysophosphatidylethanolamine (LPE), but not on lysophosphatidylserine (LPS), and lysophosphatidylglycerol (LPG). It acts by transphosphatidylation, releasing exclusively cyclic phosphate products as second products. Induces dermonecrosis, hemolysis, increased vascular permeability, edema, inflammatory response, and platelet aggregation. The sequence is that of Dermonecrotic toxin LhSicTox-alphaIA1ii from Loxosceles hirsuta (Recluse spider).